A 251-amino-acid polypeptide reads, in one-letter code: Segregation and condensation protein A (251 aa).

Belongs to the ScpA family. As to quaternary structure, component of a cohesin-like complex composed of ScpA, ScpB and the Smc homodimer, in which ScpA and ScpB bind to the head domain of Smc. The presence of the three proteins is required for the association of the complex with DNA.

It is found in the cytoplasm. Its function is as follows. Participates in chromosomal partition during cell division. May act via the formation of a condensin-like complex containing Smc and ScpB that pull DNA away from mid-cell into both cell halves. The sequence is that of Segregation and condensation protein A from Bacillus licheniformis (strain ATCC 14580 / DSM 13 / JCM 2505 / CCUG 7422 / NBRC 12200 / NCIMB 9375 / NCTC 10341 / NRRL NRS-1264 / Gibson 46).